The following is a 306-amino-acid chain: Methionyl-tRNA formyltransferase (306 aa).

110 to 113 serves as a coordination point for (6S)-5,6,7,8-tetrahydrofolate; that stretch reads SLLP.

It belongs to the Fmt family.

It carries out the reaction L-methionyl-tRNA(fMet) + (6R)-10-formyltetrahydrofolate = N-formyl-L-methionyl-tRNA(fMet) + (6S)-5,6,7,8-tetrahydrofolate + H(+). In terms of biological role, attaches a formyl group to the free amino group of methionyl-tRNA(fMet). The formyl group appears to play a dual role in the initiator identity of N-formylmethionyl-tRNA by promoting its recognition by IF2 and preventing the misappropriation of this tRNA by the elongation apparatus. This chain is Methionyl-tRNA formyltransferase, found in Brucella anthropi (strain ATCC 49188 / DSM 6882 / CCUG 24695 / JCM 21032 / LMG 3331 / NBRC 15819 / NCTC 12168 / Alc 37) (Ochrobactrum anthropi).